The following is a 236-amino-acid chain: 4-aminobenzoate synthase (236 aa).

6 residues coordinate Fe(2+): glutamate 87, histidine 94, glutamate 148, histidine 180, aspartate 184, and histidine 187.

Belongs to the CADD family. In terms of assembly, homodimer. It depends on Fe(2+) as a cofactor. Mn(2+) serves as cofactor.

In terms of biological role, involved in de novo para-aminobenzoate (PABA) biosynthesis. Acts as a self-sacrificing or 'suicide' enzyme that utilizes its own active site tyrosine residue(s) as the substrate for PABA synthesis. The side chain of the tyrosine residue is released from the protein backbone via cleavage of the C(alpha)-C(beta) bond, leaving a glycine in place of the original tyrosine residue. Reaction requires O(2) and a reduced dimetal cofactor. This chain is 4-aminobenzoate synthase, found in Chlamydia muridarum (strain MoPn / Nigg).